The primary structure comprises 244 residues: tRNA pseudouridine synthase A (244 aa).

Residue D52 is the Nucleophile of the active site. Y110 contacts substrate.

It belongs to the tRNA pseudouridine synthase TruA family. Homodimer.

It carries out the reaction uridine(38/39/40) in tRNA = pseudouridine(38/39/40) in tRNA. Its function is as follows. Formation of pseudouridine at positions 38, 39 and 40 in the anticodon stem and loop of transfer RNAs. The sequence is that of tRNA pseudouridine synthase A from Geotalea daltonii (strain DSM 22248 / JCM 15807 / FRC-32) (Geobacter daltonii).